Consider the following 296-residue polypeptide: Phosphatidylglycerol--prolipoprotein diacylglyceryl transferase (296 aa).

The next 4 membrane-spanning stretches (helical) occupy residues 10–30, 57–77, 92–112, and 119–139; these read IAFS…LAAF, LLFY…MLFY, VWEG…ACGL, and LHFF…LGFG. Arginine 140 provides a ligand contact to a 1,2-diacyl-sn-glycero-3-phospho-(1'-sn-glycerol). 3 consecutive transmembrane segments (helical) span residues 194–214, 220–240, and 255–275; these read QLYE…TFSM, YAVS…VEFV, and LTMG…LLAL.

This sequence belongs to the Lgt family.

It localises to the cell inner membrane. The catalysed reaction is L-cysteinyl-[prolipoprotein] + a 1,2-diacyl-sn-glycero-3-phospho-(1'-sn-glycerol) = an S-1,2-diacyl-sn-glyceryl-L-cysteinyl-[prolipoprotein] + sn-glycerol 1-phosphate + H(+). Its pathway is protein modification; lipoprotein biosynthesis (diacylglyceryl transfer). Its function is as follows. Catalyzes the transfer of the diacylglyceryl group from phosphatidylglycerol to the sulfhydryl group of the N-terminal cysteine of a prolipoprotein, the first step in the formation of mature lipoproteins. The sequence is that of Phosphatidylglycerol--prolipoprotein diacylglyceryl transferase from Xanthomonas campestris pv. campestris (strain 8004).